The chain runs to 2005 residues: Sodium channel protein type 2 subunit alpha (2005 aa).

The Cytoplasmic segment spans residues 1 to 129 (MARSVLVPPG…KLAIKILVHS (129 aa)). S4 bears the Phosphoserine mark. Residues 28–61 (RIAEEKAKRPKQERKDEDDENGPKPNSDLEAGKS) form a disordered region. A Glycyl lysine isopeptide (Lys-Gly) (interchain with G-Cter in SUMO1) cross-link involves residue K38. The I repeat unit spans residues 111-456 (ILTPFNPIRK…QQMLEQLKKQ (346 aa)). A helical transmembrane segment spans residues 130–148 (LFNVLIMCTILTNCVFMTM). Residues 149 to 155 (SNPPDWT) are Extracellular-facing. The helical transmembrane segment at 156–176 (KNVEYTFTGIYTFESLIKILA) threads the bilayer. Over 177-190 (RGFCLEDFTFLRNP) the chain is Cytoplasmic. A helical membrane pass occupies residues 191-208 (WNWLDFTVITFAYVTEFV). Over 209–214 (NLGNVS) the chain is Extracellular. N-linked (GlcNAc...) asparagine glycosylation occurs at N212. The helical transmembrane segment at 215-231 (ALRTFRVLRALKTISVI) threads the bilayer. Residues 232–250 (PGLKTIVGALIQSVKKLSD) are Cytoplasmic-facing. A helical transmembrane segment spans residues 251 to 270 (VMILTVFCLSVFALIGLQLF). Over 271 to 369 (MGNLRNKCLQ…PNYGYTSFDT (99 aa)) the chain is Extracellular. Cysteines 278 and 338 form a disulfide. N285, N291, N297, N303, N308, and N340 each carry an N-linked (GlcNAc...) asparagine glycan. The segment at residues 370–394 (FSWAFLSLFRLMTQDFWENLYQLTL) is an intramembrane region (pore-forming). At 395–401 (RAAGKTY) the chain is on the extracellular side. A helical transmembrane segment spans residues 402–422 (MIFFVLVIFLGSFYLINLILA). The Cytoplasmic portion of the chain corresponds to 423–759 (VVAMAYEEQN…HVVNLVVMDP (337 aa)). S468, S471, S484, S526, S528, S531, S553, S554, and S558 each carry phosphoserine. The disordered stretch occupies residues 494-529 (SSKSEKELKNRRKKKKQKEQAGEEEKEDAVRKSASE). Residues 511-529 (KEQAGEEEKEDAVRKSASE) are compositionally biased toward basic and acidic residues. S554 is modified (phosphoserine; by PKC; in vitro). 2 positions are modified to phosphoserine; by PKC; in vitro: S573 and S576. 6 positions are modified to phosphoserine: S589, S610, S623, S687, S688, and S721. The interval 591–634 (NDFADDEHSTFEDNDSRRDSLFVPHRHGERRPSNVSQASRASRG) is disordered. Basic and acidic residues predominate over residues 596-610 (DEHSTFEDNDSRRDS). An II repeat occupies 741 to 1013 (CCKPWLKVKH…QIAVGRMQKG (273 aa)). The chain crosses the membrane as a helical span at residues 760-778 (FVDLAITICIVLNTLFMAM). The Extracellular portion of the chain corresponds to 779–789 (EHYPMTEQFSS). Residues 790 to 809 (VLSVGNLVFTGIFTAEMFLK) form a helical membrane-spanning segment. At 810–823 (IIAMDPYYYFQEGW) the chain is on the cytoplasmic side. The helical transmembrane segment at 824–843 (NIFDGFIVSLSLMELGLANV) threads the bilayer. Over 844–845 (EG) the chain is Extracellular. The chain crosses the membrane as a helical span at residues 846–863 (LSVLRSFRLLRVFKLAKS). Over 864–879 (WPTLNMLIKIIGNSVG) the chain is Cytoplasmic. The helical transmembrane segment at 880–898 (ALGNLTLVLAIIVFIFAVV) threads the bilayer. The Extracellular portion of the chain corresponds to 899 to 927 (GMQLFGKSYKECVCKISNDCELPRWHMHH). Cysteines 912 and 918 form a disulfide. A binds SCN2B region spans residues 917 to 918 (DC). Positions 928–948 (FFHSFLIVFRVLCGEWIETMW) form an intramembrane region, pore-forming. Over 949–961 (DCMEVAGQTMCLT) the chain is Extracellular. An intrachain disulfide couples C950 to C959. The helical transmembrane segment at 962 to 982 (VFMMVMVIGNLVVLNLFLALL) threads the bilayer. Residues 983–1209 (LSSFSSDNLA…TCYKIVEHNW (227 aa)) are Cytoplasmic-facing. The interval 1120–1166 (EEFSSESDMEESKEKLNATSSSEGSTVDIGAPAEGEQPEAEPEESLE) is disordered. The span at 1155–1166 (EQPEAEPEESLE) shows a compositional bias: acidic residues. The stretch at 1190–1504 (KGKLWWNLRK…KKYYNAMKKL (315 aa)) is one III repeat. The chain crosses the membrane as a helical span at residues 1210-1227 (FETFIVFMILLSSGALAF). Residues 1228–1240 (EDIYIEQRKTIKT) are Extracellular-facing. Residues 1241-1259 (MLEYADKVFTYIFILEMLL) traverse the membrane as a helical segment. The Cytoplasmic segment spans residues 1260–1273 (KWVAYGFQMYFTNA). The helical transmembrane segment at 1274-1292 (WCWLDFLIVDVSLVSLTAN) threads the bilayer. Topologically, residues 1293-1300 (ALGYSELG) are extracellular. The helical transmembrane segment at 1301-1319 (AIKSLRTLRALRPLRALSR) threads the bilayer. Topologically, residues 1320 to 1336 (FEGMRVVVNALLGAIPS) are cytoplasmic. A helical transmembrane segment spans residues 1337 to 1356 (IMNVLLVCLIFWLIFSIMGV). Topologically, residues 1357–1408 (NLFAGKFYHCINYTTGEMFDVSVVNNYSECQALIESNQTARWKNVKVNFDNV) are extracellular. The cysteines at positions 1366 and 1386 are disulfide-linked. Residues N1368, N1382, and N1393 are each glycosylated (N-linked (GlcNAc...) asparagine). An intramembrane region (pore-forming) is located at residues 1409 to 1430 (GLGYLSLLQVATFKGWMDIMYA). Residues 1431–1447 (AVDSRNVELQPKYEDNL) are Extracellular-facing. Residues 1448–1469 (YMYLYFVIFIIFGSFFTLNLFI) traverse the membrane as a helical segment. Residues 1470-1532 (GVIIDNFNQQ…MVFDFVTKQV (63 aa)) lie on the Cytoplasmic side of the membrane. S1506 bears the Phosphoserine; by PKC mark. Residues 1513 to 1811 (IPRPANKFQG…WEKFDPDATQ (299 aa)) form an IV repeat. The chain crosses the membrane as a helical span at residues 1533 to 1550 (FDISIMILICLNMVTMMV). Topologically, residues 1551–1561 (ETDDQSQEMTN) are extracellular. A helical transmembrane segment spans residues 1562-1580 (ILYWINLVFIVLFTGECVL). Topologically, residues 1581 to 1592 (KLISLRHYYFTI) are cytoplasmic. The helical transmembrane segment at 1593–1610 (GWNIFDFVVVILSIVGMF) threads the bilayer. Over 1611 to 1623 (LAELIEKYFVSPT) the chain is Extracellular. The helical transmembrane segment at 1624 to 1640 (LFRVIRLARIGRILRLI) threads the bilayer. Residues 1641–1659 (KGAKGIRTLLFALMMSLPA) are Cytoplasmic-facing. A helical membrane pass occupies residues 1660-1677 (LFNIGLLLFLVMFIYAIF). Over 1678–1699 (GMSNFAYVKREVGIDDMFNFET) the chain is Extracellular. Residues 1700-1722 (FGNSMICLFQITTSAGWDGLLAP) constitute an intramembrane region (pore-forming). At 1723–1752 (ILNSGPPDCDPEKDHPGSSVKGDCGNPSVG) the chain is on the extracellular side. C1731 and C1746 are joined by a disulfide. The helical transmembrane segment at 1753-1775 (IFFFVSYIIISFLVVVNMYIAVI) threads the bilayer. At 1776–2005 (LENFSVATEE…KGKDIRESKK (230 aa)) the chain is on the cytoplasmic side. Residues 1905-1934 (EEVSAIVIQRAYRRYLLKQKVKKVSSIYKK) enclose the IQ domain. Residue S1930 is modified to Phosphoserine. Basic and acidic residues predominate over residues 1933–1964 (KKDKGKEDEGTPIKEDIITDKLNENSTPEKTD). The interval 1933-2005 (KKDKGKEDEG…KGKDIRESKK (73 aa)) is disordered. T1943, T1963, and T1966 each carry phosphothreonine. S1971 carries the post-translational modification Phosphoserine. Over residues 1979 to 2005 (TKPEKEKFEKDKSEKEDKGKDIRESKK) the composition is skewed to basic and acidic residues.

It belongs to the sodium channel (TC 1.A.1.10) family. Nav1.2/SCN2A subfamily. Heterooligomer of a large alpha subunit and a smaller beta subunit. Heterooligomer with SCN2B or SCN4B; disulfide-linked. Heterooligomer with SCN1B or SCN3B; non-covalently linked. Interacts with NEDD4L. Interacts with CALM. Interacts with TMEM233. Interacts with the conotoxin GVIIJ. Interacts with the scorpion toxin BMK M1. In terms of processing, may be ubiquitinated by NEDD4L; which would promote its endocytosis. Phosphorylation at Ser-1506 by PKC in a highly conserved cytoplasmic loop slows inactivation of the sodium channel and reduces peak sodium currents. Post-translationally, sumoylated at Lys-38. Sumoylation is induced by hypoxia, increases voltage-gated sodium current and mediates the early response to acute hypoxia in neurons. Sumoylated SCN2A is located at the cell membrane. As to expression, expressed in brain (at protein level). Expressed in cerebellar granule neurons (at protein level).

It localises to the cell membrane. It catalyses the reaction Na(+)(in) = Na(+)(out). Mediates the voltage-dependent sodium ion permeability of excitable membranes. Assuming opened or closed conformations in response to the voltage difference across the membrane, the protein forms a sodium-selective channel through which Na(+) ions may pass in accordance with their electrochemical gradient. Implicated in the regulation of hippocampal replay occurring within sharp wave ripples (SPW-R) important for memory. This is Sodium channel protein type 2 subunit alpha from Rattus norvegicus (Rat).